The following is a 276-amino-acid chain: 3-methyl-2-oxobutanoate hydroxymethyltransferase (276 aa).

Asp-44 and Asp-83 together coordinate Mg(2+). 3-methyl-2-oxobutanoate is bound by residues 44 to 45, Asp-83, and Lys-112; that span reads DS. Position 114 (Glu-114) interacts with Mg(2+). The active-site Proton acceptor is Glu-180. The segment at 256–276 is disordered; the sequence is PTEAQSSRMKPDELSRALNAE.

The protein belongs to the PanB family. Homodecamer; pentamer of dimers. Mg(2+) serves as cofactor.

It localises to the cytoplasm. It catalyses the reaction 3-methyl-2-oxobutanoate + (6R)-5,10-methylene-5,6,7,8-tetrahydrofolate + H2O = 2-dehydropantoate + (6S)-5,6,7,8-tetrahydrofolate. It functions in the pathway cofactor biosynthesis; (R)-pantothenate biosynthesis; (R)-pantoate from 3-methyl-2-oxobutanoate: step 1/2. Its function is as follows. Catalyzes the reversible reaction in which hydroxymethyl group from 5,10-methylenetetrahydrofolate is transferred onto alpha-ketoisovalerate to form ketopantoate. The sequence is that of 3-methyl-2-oxobutanoate hydroxymethyltransferase from Gluconacetobacter diazotrophicus (strain ATCC 49037 / DSM 5601 / CCUG 37298 / CIP 103539 / LMG 7603 / PAl5).